The primary structure comprises 397 residues: Phosphoglycerate kinase (397 aa).

Substrate contacts are provided by residues Asp-25–Asn-27, Arg-41, His-64–Arg-67, Arg-118, and Arg-151. ATP-binding positions include Lys-202, Glu-324, and Gly-350–Thr-353.

This sequence belongs to the phosphoglycerate kinase family. Monomer.

It localises to the cytoplasm. It carries out the reaction (2R)-3-phosphoglycerate + ATP = (2R)-3-phospho-glyceroyl phosphate + ADP. Its pathway is carbohydrate degradation; glycolysis; pyruvate from D-glyceraldehyde 3-phosphate: step 2/5. This Janthinobacterium sp. (strain Marseille) (Minibacterium massiliensis) protein is Phosphoglycerate kinase.